A 307-amino-acid polypeptide reads, in one-letter code: Protein TIPIN homolog (307 aa).

Disordered regions lie at residues 1–50 (MASL…SQDA) and 252–279 (ASMD…LSNE). Over residues 262-271 (PLPPSQPPTP) the composition is skewed to pro residues.

Belongs to the CSM3 family.

Its subcellular location is the cytoplasm. It localises to the nucleus. In terms of biological role, required for normal progression of S-phase. Important for cell survival after DNA damage or replication stress. The chain is Protein TIPIN homolog from Drosophila melanogaster (Fruit fly).